A 353-amino-acid chain; its full sequence is Photosystem II protein D1 (353 aa).

Position 2 is an N-acetylthreonine (T2). Residue T2 is modified to Phosphothreonine. A run of 3 helical transmembrane segments spans residues 29-46 (YIGW…TATS), 118-133 (HFLL…EWEL), and 142-156 (WIAV…AATA). Residue H118 coordinates chlorophyll a. Y126 provides a ligand contact to pheophytin a. 2 residues coordinate [CaMn4O5] cluster: D170 and E189. The helical transmembrane segment at 197–218 (FHMLGVAGVFGGSLFSAMHGSL) threads the bilayer. Position 198 (H198) interacts with chlorophyll a. Residues H215 and 264–265 (SF) contribute to the a quinone site. Position 215 (H215) interacts with Fe cation. H272 serves as a coordination point for Fe cation. A helical transmembrane segment spans residues 274 to 288 (FLAAWPVVGIWFTAL). [CaMn4O5] cluster contacts are provided by H332, E333, D342, and A344. The propeptide occupies 345–353 (AVEAPSTNG).

The protein belongs to the reaction center PufL/M/PsbA/D family. As to quaternary structure, PSII is composed of 1 copy each of membrane proteins PsbA, PsbB, PsbC, PsbD, PsbE, PsbF, PsbH, PsbI, PsbJ, PsbK, PsbL, PsbM, PsbT, PsbX, PsbY, PsbZ, Psb30/Ycf12, at least 3 peripheral proteins of the oxygen-evolving complex and a large number of cofactors. It forms dimeric complexes. The D1/D2 heterodimer binds P680, chlorophylls that are the primary electron donor of PSII, and subsequent electron acceptors. It shares a non-heme iron and each subunit binds pheophytin, quinone, additional chlorophylls, carotenoids and lipids. D1 provides most of the ligands for the Mn4-Ca-O5 cluster of the oxygen-evolving complex (OEC). There is also a Cl(-1) ion associated with D1 and D2, which is required for oxygen evolution. The PSII complex binds additional chlorophylls, carotenoids and specific lipids. serves as cofactor. In terms of processing, tyr-161 forms a radical intermediate that is referred to as redox-active TyrZ, YZ or Y-Z. C-terminally processed by CTPA; processing is essential to allow assembly of the oxygen-evolving complex and thus photosynthetic growth.

It localises to the plastid. The protein resides in the chloroplast thylakoid membrane. The enzyme catalyses 2 a plastoquinone + 4 hnu + 2 H2O = 2 a plastoquinol + O2. Photosystem II (PSII) is a light-driven water:plastoquinone oxidoreductase that uses light energy to abstract electrons from H(2)O, generating O(2) and a proton gradient subsequently used for ATP formation. It consists of a core antenna complex that captures photons, and an electron transfer chain that converts photonic excitation into a charge separation. The D1/D2 (PsbA/PsbD) reaction center heterodimer binds P680, the primary electron donor of PSII as well as several subsequent electron acceptors. This is Photosystem II protein D1 from Ceratophyllum demersum (Rigid hornwort).